Reading from the N-terminus, the 467-residue chain is Acyl-lipid (8-3)-desaturase B (467 aa).

The Cytochrome b5 heme-binding domain maps to 12-89; the sequence is LKLYTWDEVS…IKQYEIGYIS (78 aa). Heme is bound by residues H47 and H70. 2 helical membrane passes run 123 to 143 and 152 to 172; these read VSVG…VTYY and FWLN…FGLH. The Histidine box-1 motif lies at 175–179; it reads HDACH. The helical transmembrane segment at 187 to 207 threads the bilayer; sequence MTWKILGATFDLFAGASFYAW. A Histidine box-2 motif is present at residues 211 to 216; it reads HVIGHH. The next 2 membrane-spanning stretches (helical) occupy residues 293–313 and 317–337; these read AIFI…PLIY and FSHL…YLAI. A Histidine box-3 motif is present at residues 400–404; the sequence is QVIHH.

Belongs to the fatty acid desaturase type 1 family. Fe(2+) serves as cofactor.

The protein resides in the membrane. The catalysed reaction is an (8Z,11Z,14Z)-icosatrienoyl-containing glycerolipid + 2 Fe(II)-[cytochrome b5] + O2 + 2 H(+) = (5Z,8Z,11Z,14Z)-eicosatetraenoyl-containing glycerolipid + 2 Fe(III)-[cytochrome b5] + 2 H2O. The enzyme catalyses an (8Z,11Z,14Z,17Z)-eicosatetraenoyl-containing glycerolipid + 2 Fe(II)-[cytochrome b5] + O2 + 2 H(+) = a (5Z,8Z,11Z,14Z,17Z)-eicosapentaenoyl-containing glycerolipid + 2 Fe(III)-[cytochrome b5] + 2 H2O. Its function is as follows. Fatty acid desaturase that introduces a cis double bond at the 5-position in 18-carbon polyunsaturated fatty acids. The sequence is that of Acyl-lipid (8-3)-desaturase B (fadB) from Dictyostelium discoideum (Social amoeba).